Consider the following 372-residue polypeptide: Aminodeoxyfutalosine synthase (372 aa).

Positions His53–Pro292 constitute a Radical SAM core domain. Residues Cys69, Cys73, and Cys76 each contribute to the [4Fe-4S] cluster site.

This sequence belongs to the radical SAM superfamily. MqnE family. [4Fe-4S] cluster serves as cofactor.

It carries out the reaction 3-[(1-carboxyvinyl)-oxy]benzoate + S-adenosyl-L-methionine + H2O = 6-amino-6-deoxyfutalosine + hydrogencarbonate + L-methionine + H(+). Its pathway is quinol/quinone metabolism; menaquinone biosynthesis. In terms of biological role, radical SAM enzyme that catalyzes the addition of the adenosyl radical to the double bond of 3-[(1-carboxyvinyl)oxy]benzoate, leading to aminodeoxyfutalosine (AFL), a key intermediate in the formation of menaquinone (MK, vitamin K2) from chorismate. This Thermus thermophilus (strain ATCC 27634 / DSM 579 / HB8) protein is Aminodeoxyfutalosine synthase.